Here is a 991-residue protein sequence, read N- to C-terminus: Collagenase ColT (991 aa).

An N-terminal signal peptide occupies residues 1–28 (MKKKFIKMLCSIAIGCMISTSYSIKVSA). Positions 29-52 (FSNGNTKTNPNGEFKSLSLNSTNP) are excised as a propeptide. The segment at 53-727 (YKTKYSFNDL…VYDIVFHGLL (675 aa)) is S1 metalloprotease domain, degrades FALGPA (furylacryloyl-Leu-Gly-Pro-Ala). Residues 57 to 330 (YSFNDLNKLS…AIEAIKEDFN (274 aa)) are activator domain. The tract at residues 340–611 (DINKLIEEGK…MENLVNNYDN (272 aa)) is catalytic subdomain. Residue Glu440 coordinates Ca(2+). Residue His465 participates in Zn(2+) binding. Residue Glu466 is part of the active site. Zn(2+) is bound at residue His469. Residues Gly473, Ile477, and Gly479 each contribute to the Ca(2+) site. Glu499 contacts Zn(2+). The segment at 619–731 (DDYMKQYDNK…VFHGLLSHNK (113 aa)) is helper subdomain. Collagen-binding domain regions lie at residues 755-870 (IYEK…NISD) and 878-991 (IKKI…VIIN). Glu757, Glu759, Asn761, Asp784, Asp787, Glu883, Glu885, Asn887, Asp888, Asp910, and Asp913 together coordinate Ca(2+).

This sequence belongs to the peptidase M9B family. Collagenase subfamily. It depends on Ca(2+) as a cofactor. Requires Zn(2+) as cofactor.

It localises to the secreted. It catalyses the reaction Digestion of native collagen in the triple helical region at Xaa-|-Gly bonds. With synthetic peptides, a preference is shown for Gly at P3 and P1', Pro and Ala at P2 and P2', and hydroxyproline, Ala or Arg at P3'.. With respect to regulation, partially inhibited by 1-10-phenanthroline; inactivation is irreversible. Partially inhibited by EDTA; inactivation is reversible. Inhibited by broad-spectrum zinc metalloprotease inhibitor batimastat. N-aryl mercaptoacetamide-based inhibitors have been isolated that act on clostridial collagenases with submicromolar affinity while having negligibile activity on human collagenases. In terms of biological role, clostridial collagenases are among the most efficient degraders of eukaryotic collagen known; saprophytes use collagen as a carbon source while pathogens additionally digest collagen to aid in host colonization. Has both tripeptidylcarboxypeptidase on Gly-X-Y and endopeptidase activities; the endopeptidase cuts within the triple helix region of collagen while tripeptidylcarboxypeptidase successively digests the exposed ends, thus clostridial collagenases can digest large sections of collagen. The activator domain (residues 57-330) and catalytic subdomain (340-611) open and close around substrate allowing digestion when the protein is closed. The polypeptide is Collagenase ColT (Clostridium tetani (strain Massachusetts / E88)).